We begin with the raw amino-acid sequence, 726 residues long: Fatty acid oxidation complex subunit alpha (726 aa).

The enoyl-CoA hydratase/isomerase stretch occupies residues 1-189 (MIYQGENLSV…KIGMVDGIVS (189 aa)). Residue Asp-296 coordinates substrate. A 3-hydroxyacyl-CoA dehydrogenase region spans residues 311-726 (EPVKNAAVLG…PKSSVSSPSV (416 aa)). NAD(+)-binding positions include Met-324, Asp-343, 400-402 (VVE), Lys-407, and Ser-429. His-450 (for 3-hydroxyacyl-CoA dehydrogenase activity) is an active-site residue. Asn-453 contributes to the NAD(+) binding site. Residues Asn-500 and Tyr-660 each contribute to the substrate site.

It in the N-terminal section; belongs to the enoyl-CoA hydratase/isomerase family. In the C-terminal section; belongs to the 3-hydroxyacyl-CoA dehydrogenase family. Heterotetramer of two alpha chains (FadB) and two beta chains (FadA).

The catalysed reaction is a (3S)-3-hydroxyacyl-CoA + NAD(+) = a 3-oxoacyl-CoA + NADH + H(+). It catalyses the reaction a (3S)-3-hydroxyacyl-CoA = a (2E)-enoyl-CoA + H2O. The enzyme catalyses a 4-saturated-(3S)-3-hydroxyacyl-CoA = a (3E)-enoyl-CoA + H2O. It carries out the reaction (3S)-3-hydroxybutanoyl-CoA = (3R)-3-hydroxybutanoyl-CoA. The catalysed reaction is a (3Z)-enoyl-CoA = a 4-saturated (2E)-enoyl-CoA. It catalyses the reaction a (3E)-enoyl-CoA = a 4-saturated (2E)-enoyl-CoA. It participates in lipid metabolism; fatty acid beta-oxidation. Its function is as follows. Involved in the aerobic and anaerobic degradation of long-chain fatty acids via beta-oxidation cycle. Catalyzes the formation of 3-oxoacyl-CoA from enoyl-CoA via L-3-hydroxyacyl-CoA. It can also use D-3-hydroxyacyl-CoA and cis-3-enoyl-CoA as substrate. The protein is Fatty acid oxidation complex subunit alpha of Aliivibrio salmonicida (strain LFI1238) (Vibrio salmonicida (strain LFI1238)).